Reading from the N-terminus, the 228-residue chain is 5'-methylthioadenosine/S-adenosylhomocysteine nucleosidase (228 aa).

The Proton acceptor role is filled by Glu-11. Substrate-binding positions include Gly-77, Ile-151, and 172 to 173 (ME). Residue Asp-196 is the Proton donor of the active site.

Belongs to the PNP/UDP phosphorylase family. MtnN subfamily.

The enzyme catalyses S-adenosyl-L-homocysteine + H2O = S-(5-deoxy-D-ribos-5-yl)-L-homocysteine + adenine. The catalysed reaction is S-methyl-5'-thioadenosine + H2O = 5-(methylsulfanyl)-D-ribose + adenine. It carries out the reaction 5'-deoxyadenosine + H2O = 5-deoxy-D-ribose + adenine. Its pathway is amino-acid biosynthesis; L-methionine biosynthesis via salvage pathway; S-methyl-5-thio-alpha-D-ribose 1-phosphate from S-methyl-5'-thioadenosine (hydrolase route): step 1/2. In terms of biological role, catalyzes the irreversible cleavage of the glycosidic bond in both 5'-methylthioadenosine (MTA) and S-adenosylhomocysteine (SAH/AdoHcy) to adenine and the corresponding thioribose, 5'-methylthioribose and S-ribosylhomocysteine, respectively. Also cleaves 5'-deoxyadenosine, a toxic by-product of radical S-adenosylmethionine (SAM) enzymes, into 5-deoxyribose and adenine. This chain is 5'-methylthioadenosine/S-adenosylhomocysteine nucleosidase, found in Staphylococcus carnosus (strain TM300).